The following is a 192-amino-acid chain: Putative manganese efflux pump MntP (192 aa).

A run of 6 helical transmembrane segments spans residues 2 to 22 (IAII…AFAV), 41 to 61 (SALW…YAAS), 62 to 82 (AFSA…LAFI), 109 to 129 (MLPL…SLAF), 136 to 156 (FAIL…LYIG), and 172 to 192 (GVVL…VIAF).

Belongs to the MntP (TC 9.B.29) family.

Its subcellular location is the cell membrane. In terms of biological role, probably functions as a manganese efflux pump. This chain is Putative manganese efflux pump MntP, found in Bifidobacterium longum subsp. infantis (strain ATCC 15697 / DSM 20088 / JCM 1222 / NCTC 11817 / S12).